Consider the following 359-residue polypeptide: MSYSIYKSTVNIPLSHGVVHSFCHNMNCNFMHIFKFVLDFNMKNVTEVTLFVLKGFTDNLELQTIFFFLFLAIYLFTLMGNLGLILVVIRDSQLHKPMYYFLSMLSSVDACYSSVITPNMLVDFTTKNKVISFLGCVAQVFLACSFGTTECFLLAAMAYDRYVAIYNPLLYSVSMSPRVYMPLINASYVAGILHATIHTVATFSLSFCGANEIRRVFCDIPPLLAISYSDTHTNQLLLFYFVGSIELVTILIVLISYGLILLAILKMYSAEGRRKVFSTCGAHLTGVSIYYGTILFMYVRPSSSYASDHDMIVSIFYTIVIPLLNPVIYSLRNKDVKDSMKKMFGKNQVINKVYFHTKK.

Topologically, residues 1–64 (MSYSIYKSTV…GFTDNLELQT (64 aa)) are extracellular. The N-linked (GlcNAc...) asparagine glycan is linked to Asn44. The chain crosses the membrane as a helical span at residues 65–85 (IFFFLFLAIYLFTLMGNLGLI). Residues 86-93 (LVVIRDSQ) are Cytoplasmic-facing. Residues 94–114 (LHKPMYYFLSMLSSVDACYSS) traverse the membrane as a helical segment. Over 115–138 (VITPNMLVDFTTKNKVISFLGCVA) the chain is Extracellular. Residues 139 to 159 (QVFLACSFGTTECFLLAAMAY) traverse the membrane as a helical segment. Topologically, residues 160-178 (DRYVAIYNPLLYSVSMSPR) are cytoplasmic. A helical membrane pass occupies residues 179-199 (VYMPLINASYVAGILHATIHT). Residues 200-235 (VATFSLSFCGANEIRRVFCDIPPLLAISYSDTHTNQ) are Extracellular-facing. Residues 236 to 256 (LLLFYFVGSIELVTILIVLIS) form a helical membrane-spanning segment. The Cytoplasmic segment spans residues 257 to 276 (YGLILLAILKMYSAEGRRKV). A helical transmembrane segment spans residues 277-297 (FSTCGAHLTGVSIYYGTILFM). The Extracellular segment spans residues 298–310 (YVRPSSSYASDHD). A helical transmembrane segment spans residues 311–331 (MIVSIFYTIVIPLLNPVIYSL). Residues 332–359 (RNKDVKDSMKKMFGKNQVINKVYFHTKK) are Cytoplasmic-facing.

This sequence belongs to the G-protein coupled receptor 1 family.

Its subcellular location is the cell membrane. Odorant receptor. This is Olfactory receptor 5T2 (OR5T2) from Homo sapiens (Human).